The primary structure comprises 154 residues: Large ribosomal subunit protein uL22c (154 aa).

The protein belongs to the universal ribosomal protein uL22 family. Part of the 50S ribosomal subunit.

It localises to the plastid. The protein localises to the chloroplast. Its function is as follows. This protein binds specifically to 23S rRNA. Functionally, the globular domain of the protein is located near the polypeptide exit tunnel on the outside of the subunit, while an extended beta-hairpin is found that lines the wall of the exit tunnel in the center of the 70S ribosome. This chain is Large ribosomal subunit protein uL22c (rpl22), found in Guizotia abyssinica (Niger).